Consider the following 788-residue polypeptide: Protein translocase subunit SecA 2 (788 aa).

ATP is bound by residues Gln86, 104 to 108 (GEGKT), and Asp493.

It belongs to the SecA family. As to quaternary structure, monomer and homodimer. Part of the essential Sec protein translocation apparatus which comprises SecA, SecYEG and auxiliary proteins SecDF. Other proteins may also be involved.

It is found in the cell membrane. It localises to the cytoplasm. It catalyses the reaction ATP + H2O + cellular proteinSide 1 = ADP + phosphate + cellular proteinSide 2.. In terms of biological role, part of the Sec protein translocase complex. Interacts with the SecYEG preprotein conducting channel. Has a central role in coupling the hydrolysis of ATP to the transfer of proteins into and across the cell membrane, serving as an ATP-driven molecular motor driving the stepwise translocation of polypeptide chains across the membrane. In Geobacillus thermodenitrificans (strain NG80-2), this protein is Protein translocase subunit SecA 2.